Reading from the N-terminus, the 362-residue chain is MEKTEWSDLPEELLDLIANRYSSNIDVLRIRSTCKSWRSAVAMSKERLQFRFERYLPTSNKKIKAHLSPTTFFRITLPSSCPNKGWLVRTRQASKMYRKITLLCPLSGERITRSHQTLDLLKVGVSEIRQSYEIQIFDGLKDEKIPLDSEIFSNYIKNSDKIPSVNYHDNKIWCCKTREGSRSWTKIKNQVEDFSDIILHMGRIYAVDLKGAIWWISLSQLTIVQQTSSTPLDYYKYDSCQDTRLVEYCGDLCIVHELSITRNHIQRTVGFKVYKMDEDLAKWVEVSCLGDNTLIVACNSCFTVVASEYHGCLKNSIYFSYYDVKKAENIKVFKLDDGSITQRTDISSQSCFHMFSLPFLNY.

The F-box domain maps to 4 to 52; sequence TEWSDLPEELLDLIANRYSSNIDVLRIRSTCKSWRSAVAMSKERLQFRF.

This Arabidopsis thaliana (Mouse-ear cress) protein is Putative F-box protein At3g25750.